The primary structure comprises 150 residues: SsrA-binding protein (150 aa).

It belongs to the SmpB family.

The protein resides in the cytoplasm. In terms of biological role, required for rescue of stalled ribosomes mediated by trans-translation. Binds to transfer-messenger RNA (tmRNA), required for stable association of tmRNA with ribosomes. tmRNA and SmpB together mimic tRNA shape, replacing the anticodon stem-loop with SmpB. tmRNA is encoded by the ssrA gene; the 2 termini fold to resemble tRNA(Ala) and it encodes a 'tag peptide', a short internal open reading frame. During trans-translation Ala-aminoacylated tmRNA acts like a tRNA, entering the A-site of stalled ribosomes, displacing the stalled mRNA. The ribosome then switches to translate the ORF on the tmRNA; the nascent peptide is terminated with the 'tag peptide' encoded by the tmRNA and targeted for degradation. The ribosome is freed to recommence translation, which seems to be the essential function of trans-translation. The protein is SsrA-binding protein of Coprothermobacter proteolyticus (strain ATCC 35245 / DSM 5265 / OCM 4 / BT).